We begin with the raw amino-acid sequence, 174 residues long: ATP synthase subunit b 2 (174 aa).

A helical transmembrane segment spans residues 27-47 (IFWLIITLVAIYLILTKVALP).

It belongs to the ATPase B chain family. F-type ATPases have 2 components, F(1) - the catalytic core - and F(0) - the membrane proton channel. F(1) has five subunits: alpha(3), beta(3), gamma(1), delta(1), epsilon(1). F(0) has three main subunits: a(1), b(2) and c(10-14). The alpha and beta chains form an alternating ring which encloses part of the gamma chain. F(1) is attached to F(0) by a central stalk formed by the gamma and epsilon chains, while a peripheral stalk is formed by the delta and b chains.

It is found in the cell inner membrane. Functionally, f(1)F(0) ATP synthase produces ATP from ADP in the presence of a proton or sodium gradient. F-type ATPases consist of two structural domains, F(1) containing the extramembraneous catalytic core and F(0) containing the membrane proton channel, linked together by a central stalk and a peripheral stalk. During catalysis, ATP synthesis in the catalytic domain of F(1) is coupled via a rotary mechanism of the central stalk subunits to proton translocation. Its function is as follows. Component of the F(0) channel, it forms part of the peripheral stalk, linking F(1) to F(0). The b'-subunit is a diverged and duplicated form of b found in plants and photosynthetic bacteria. This Dinoroseobacter shibae (strain DSM 16493 / NCIMB 14021 / DFL 12) protein is ATP synthase subunit b 2 (atpF2).